A 492-amino-acid polypeptide reads, in one-letter code: Zinc finger protein GLIS2 (492 aa).

The interval valine 49–alanine 101 is disordered. Residues proline 69–glycine 129 form a transcription activation region. Low complexity predominate over residues serine 82–proline 97. The interval methionine 138 to glutamine 161 is transcription repression. The C2H2-type 1 zinc-finger motif lies at leucine 158–histidine 183. Residues tyrosine 192 to histidine 219 form a C2H2-type 2; degenerate zinc finger. 3 C2H2-type zinc fingers span residues histidine 225–histidine 247, tyrosine 253–histidine 277, and tyrosine 283–histidine 307. Residues valine 423 to lysine 444 show a composition bias toward basic and acidic residues. Residues valine 423–isoleucine 450 form a disordered region.

It belongs to the GLI C2H2-type zinc-finger protein family.

It is found in the nucleus speckle. The protein resides in the cytoplasm. Its function is as follows. Can act either as a transcription repressor or as a transcription activator, depending on the cell context. May be involved in neuron differentiation. The polypeptide is Zinc finger protein GLIS2 (glis2) (Xenopus laevis (African clawed frog)).